The chain runs to 150 residues: Developmental pluripotency-associated protein 3 (150 aa).

The segment covering Met-1 to Glu-22 has biased composition (basic and acidic residues). Residues Met-1–Leu-32 form a disordered region. A required for H3K9me2-binding region spans residues Met-1 to Ile-75. A required to exclude TET3 from the maternal pronucleus region spans residues Arg-76–Asn-150.

Expressed in the immature oocytes and in newborn ovaries. Subsequently detected in maturing oocytes and in preimplantation embryos. Expressed in pluripotent embryonic but not in differentiated somatic cells. Expressed in blastocysts, epiblasts, primordial germ cells, embryonic gonads and primitive spermatogonia. No expression is detected in adult testes.

It localises to the nucleus. It is found in the cytoplasm. Primordial germ cell (PGCs)-specific protein involved in epigenetic chromatin reprogramming in the zygote following fertilization. In zygotes, DNA demethylation occurs selectively in the paternal pronucleus before the first cell division, while the adjacent maternal pronucleus and certain paternally-imprinted loci are protected from this process. Participates in protection of DNA methylation in the maternal pronucleus by preventing conversion of 5mC to 5hmC: specifically recognizes and binds histone H3 dimethylated at 'Lys-9' (H3K9me2) on maternal genome, and protects maternal genome from TET3-mediated conversion to 5hmC and subsequent DNA demethylation. Does not bind paternal chromatin, which is mainly packed into protamine and does not contain much H3K9me2 mark. Also protects imprinted loci that are marked with H3K9me2 in mature sperm from DNA demethylation in early embryogenesis. May be important for the totipotent/pluripotent states continuing through preimplantation development. Also involved in chromatin condensation in oocytogenesis. This chain is Developmental pluripotency-associated protein 3 (Dppa3), found in Mus musculus (Mouse).